We begin with the raw amino-acid sequence, 694 residues long: Elongation factor G (694 aa).

The region spanning 8–287 (EDYRNFGIMA…AVVSYLPSPI (280 aa)) is the tr-type G domain. Residues 17-24 (AHIDAGKT), 86-90 (DTPGH), and 140-143 (NKMD) each bind GTP.

The protein belongs to the TRAFAC class translation factor GTPase superfamily. Classic translation factor GTPase family. EF-G/EF-2 subfamily.

It localises to the cytoplasm. Functionally, catalyzes the GTP-dependent ribosomal translocation step during translation elongation. During this step, the ribosome changes from the pre-translocational (PRE) to the post-translocational (POST) state as the newly formed A-site-bound peptidyl-tRNA and P-site-bound deacylated tRNA move to the P and E sites, respectively. Catalyzes the coordinated movement of the two tRNA molecules, the mRNA and conformational changes in the ribosome. The chain is Elongation factor G from Bartonella tribocorum (strain CIP 105476 / IBS 506).